A 633-amino-acid polypeptide reads, in one-letter code: tRNA uridine 5-carboxymethylaminomethyl modification enzyme MnmG (633 aa).

18–23 (GAGHAG) lines the FAD pocket. Residues 208–232 (PRVNGNTIDFDKTEEQPGDKTPNHF) form a disordered region. Over residues 216 to 229 (DFDKTEEQPGDKTP) the composition is skewed to basic and acidic residues. Residue 279-293 (GPRYCPSIEDKIVRF) participates in NAD(+) binding.

The protein belongs to the MnmG family. Homodimer. Heterotetramer of two MnmE and two MnmG subunits. Requires FAD as cofactor.

The protein resides in the cytoplasm. Functionally, NAD-binding protein involved in the addition of a carboxymethylaminomethyl (cmnm) group at the wobble position (U34) of certain tRNAs, forming tRNA-cmnm(5)s(2)U34. In Lacticaseibacillus paracasei (strain ATCC 334 / BCRC 17002 / CCUG 31169 / CIP 107868 / KCTC 3260 / NRRL B-441) (Lactobacillus paracasei), this protein is tRNA uridine 5-carboxymethylaminomethyl modification enzyme MnmG.